The following is a 157-amino-acid chain: 2-C-methyl-D-erythritol 2,4-cyclodiphosphate synthase (157 aa).

The a divalent metal cation site is built by aspartate 8 and histidine 10. 4-CDP-2-C-methyl-D-erythritol 2-phosphate-binding positions include 8–10 (DVH) and 34–35 (HS). Residue histidine 42 participates in a divalent metal cation binding. 4-CDP-2-C-methyl-D-erythritol 2-phosphate-binding positions include 56–58 (DIG), 61–65 (FPDTD), 100–106 (AQRPKMA), 132–135 (TTEE), and phenylalanine 139.

The protein belongs to the IspF family. In terms of assembly, homotrimer. A divalent metal cation is required as a cofactor.

The enzyme catalyses 4-CDP-2-C-methyl-D-erythritol 2-phosphate = 2-C-methyl-D-erythritol 2,4-cyclic diphosphate + CMP. The protein operates within isoprenoid biosynthesis; isopentenyl diphosphate biosynthesis via DXP pathway; isopentenyl diphosphate from 1-deoxy-D-xylulose 5-phosphate: step 4/6. Involved in the biosynthesis of isopentenyl diphosphate (IPP) and dimethylallyl diphosphate (DMAPP), two major building blocks of isoprenoid compounds. Catalyzes the conversion of 4-diphosphocytidyl-2-C-methyl-D-erythritol 2-phosphate (CDP-ME2P) to 2-C-methyl-D-erythritol 2,4-cyclodiphosphate (ME-CPP) with a corresponding release of cytidine 5-monophosphate (CMP). In Trichlorobacter lovleyi (strain ATCC BAA-1151 / DSM 17278 / SZ) (Geobacter lovleyi), this protein is 2-C-methyl-D-erythritol 2,4-cyclodiphosphate synthase.